Consider the following 267-residue polypeptide: Indole-3-glycerol phosphate synthase (267 aa).

Belongs to the TrpC family.

The enzyme catalyses 1-(2-carboxyphenylamino)-1-deoxy-D-ribulose 5-phosphate + H(+) = (1S,2R)-1-C-(indol-3-yl)glycerol 3-phosphate + CO2 + H2O. The protein operates within amino-acid biosynthesis; L-tryptophan biosynthesis; L-tryptophan from chorismate: step 4/5. The sequence is that of Indole-3-glycerol phosphate synthase from Polynucleobacter necessarius subsp. necessarius (strain STIR1).